We begin with the raw amino-acid sequence, 278 residues long: Shikimate dehydrogenase (NADP(+)) (278 aa).

Residues Ser19–Ser21 and Thr66 contribute to the shikimate site. The active-site Proton acceptor is the Lys70. Asp82 contributes to the NADP(+) binding site. 2 residues coordinate shikimate: Asn91 and Asp107. Residues Gly133–Ala137, Asn157–Arg162, and Ile222 contribute to the NADP(+) site. Tyr224 provides a ligand contact to shikimate. Gly245 contacts NADP(+).

The protein belongs to the shikimate dehydrogenase family. Homodimer.

It carries out the reaction shikimate + NADP(+) = 3-dehydroshikimate + NADPH + H(+). The protein operates within metabolic intermediate biosynthesis; chorismate biosynthesis; chorismate from D-erythrose 4-phosphate and phosphoenolpyruvate: step 4/7. Involved in the biosynthesis of the chorismate, which leads to the biosynthesis of aromatic amino acids. Catalyzes the reversible NADPH linked reduction of 3-dehydroshikimate (DHSA) to yield shikimate (SA). This chain is Shikimate dehydrogenase (NADP(+)), found in Jannaschia sp. (strain CCS1).